The sequence spans 142 residues: Arginine vasopressin-induced protein 1 (142 aa).

Disordered stretches follow at residues 1–28 and 74–142; these read MGTP…KQAS and RLRR…QIRH. The span at 15–28 shows a compositional bias: polar residues; sequence QVSTPQTRGRKQAS. Residues 74–88 show a composition bias toward basic residues; sequence RLRRKRPPKQNHCSR. A compositionally biased stretch (polar residues) spans 96–119; it reads STASDPQASTTDTASSEQSGNSRR.

In terms of biological role, may be involved in MAP kinase activation, epithelial sodium channel (ENaC) down-regulation and cell cycling. The polypeptide is Arginine vasopressin-induced protein 1 (Avpi1) (Mus musculus (Mouse)).